The chain runs to 568 residues: Serine/threonine-protein kinase RIO1 (568 aa).

Disordered stretches follow at residues G14 to W70 and Y83 to A109. Phosphoserine occurs at positions 21 and 22. Over residues S24–I38 the composition is skewed to basic and acidic residues. Acidic residues predominate over residues G51–W70. The segment covering G87 to M105 has biased composition (polar residues). The Protein kinase domain maps to T180–V479. Residues K208, S278, and I280 each coordinate ATP. Catalysis depends on D324, which acts as the Proton acceptor. The Mg(2+) site is built by N329 and D341. D341 (4-aspartylphosphate intermediate) is an active-site residue. The disordered stretch occupies residues V490 to K568. Acidic residues predominate over residues D497–E513. Residues Q514–R543 are compositionally biased toward basic and acidic residues. Residues E544 to K568 are compositionally biased toward basic residues.

Belongs to the protein kinase superfamily. RIO-type Ser/Thr kinase family. As to quaternary structure, associates with the precursor of the 40S ribosome subunit. Interacts (via its N-terminus) with PRMT5 (via its N-terminus). Interacts with WDR77. Found in a PRMT5 complex composed of PRMT5, WDR77 and RIOK1. Interacts (via its C-terminus) with NCL; this interaction targets NCL for PRTM5 methylation. Mg(2+) is required as a cofactor.

The protein resides in the cytoplasm. The protein localises to the cytosol. It carries out the reaction L-seryl-[protein] + ATP = O-phospho-L-seryl-[protein] + ADP + H(+). The catalysed reaction is L-threonyl-[protein] + ATP = O-phospho-L-threonyl-[protein] + ADP + H(+). The enzyme catalyses ATP + H2O = ADP + phosphate + H(+). Involved in the final steps of cytoplasmic maturation of the 40S ribosomal subunit. Involved in processing of 18S-E pre-rRNA to the mature 18S rRNA. Required for the recycling of NOB1 and PNO1 from the late 40S precursor. The association with the very late 40S subunit intermediate may involve a translation-like checkpoint point cycle preceeding the binding to the 60S ribosomal subunit. Despite the protein kinase domain is proposed to act predominantly as an ATPase. The catalytic activity regulates its dynamic association with the 40S subunit. In addition to its role in ribosomal biogenesis acts as an adapter protein by recruiting NCL/nucleolin the to PRMT5 complex for its symmetrical methylation. The chain is Serine/threonine-protein kinase RIO1 from Homo sapiens (Human).